Consider the following 250-residue polypeptide: Ribosomal RNA small subunit methyltransferase J (250 aa).

Residues 102–103 (RD), 118–119 (ER), 154–155 (SS), and Asp-172 contribute to the S-adenosyl-L-methionine site.

Belongs to the methyltransferase superfamily. RsmJ family.

The protein resides in the cytoplasm. The catalysed reaction is guanosine(1516) in 16S rRNA + S-adenosyl-L-methionine = N(2)-methylguanosine(1516) in 16S rRNA + S-adenosyl-L-homocysteine + H(+). Functionally, specifically methylates the guanosine in position 1516 of 16S rRNA. The protein is Ribosomal RNA small subunit methyltransferase J of Edwardsiella ictaluri (strain 93-146).